Consider the following 366-residue polypeptide: Anhydro-N-acetylmuramic acid kinase (366 aa).

10 to 17 (GTSMDGID) is a binding site for ATP.

Belongs to the anhydro-N-acetylmuramic acid kinase family.

It catalyses the reaction 1,6-anhydro-N-acetyl-beta-muramate + ATP + H2O = N-acetyl-D-muramate 6-phosphate + ADP + H(+). Its pathway is amino-sugar metabolism; 1,6-anhydro-N-acetylmuramate degradation. The protein operates within cell wall biogenesis; peptidoglycan recycling. In terms of biological role, catalyzes the specific phosphorylation of 1,6-anhydro-N-acetylmuramic acid (anhMurNAc) with the simultaneous cleavage of the 1,6-anhydro ring, generating MurNAc-6-P. Is required for the utilization of anhMurNAc either imported from the medium or derived from its own cell wall murein, and thus plays a role in cell wall recycling. The protein is Anhydro-N-acetylmuramic acid kinase of Legionella pneumophila (strain Paris).